Consider the following 34-residue polypeptide: Voltage sensor toxin 3 (34 aa).

3 cysteine pairs are disulfide-bonded: C2–C17, C9–C22, and C16–C29.

The protein belongs to the neurotoxin 10 (Hwtx-1) family. 61 (VSTX3) subfamily. As to expression, expressed by the venom gland.

It localises to the secreted. Potent voltage-gated sodium channel blocker (IC(50)=190 nM and 210 nM on human and rat Nav1.3/SCN3A respectively, 430 nM on human Nav1.7/SCN9A, 770 nM and 290 nM on human and rat Nav1.8/SCN10A, respectively). Binds the voltage-sensor domain of the potassium channel KvAP (from Aeropyrum pernix) and weakly inhibits this channel. The polypeptide is Voltage sensor toxin 3 (Grammostola rosea (Chilean rose tarantula)).